We begin with the raw amino-acid sequence, 167 residues long: Putative peroxiredoxin-A (167 aa).

The 164-residue stretch at 4 to 167 folds into the Thioredoxin domain; that stretch reads IKRGDRFPTT…STAQKIIAKL (164 aa). The Cysteine sulfenic acid (-SOH) intermediate role is filled by C53. Positions 165 to 167 match the Microbody targeting signal motif; it reads AKL.

It belongs to the peroxiredoxin family. Prx5 subfamily.

Its subcellular location is the peroxisome membrane. The catalysed reaction is a hydroperoxide + [thioredoxin]-dithiol = an alcohol + [thioredoxin]-disulfide + H2O. In terms of biological role, thiol-specific peroxidase that catalyzes the reduction of hydrogen peroxide and organic hydroperoxides to water and alcohols, respectively. Plays a role in cell protection against oxidative stress by detoxifying peroxides and as sensor of hydrogen peroxide-mediated signaling events. In Candida boidinii (Yeast), this protein is Putative peroxiredoxin-A (PMPA).